A 395-amino-acid polypeptide reads, in one-letter code: ETS-related transcription factor Elf-3 (395 aa).

Positions 69–155 (EPPAVLHLAE…AQLRDLTSSS (87 aa)) constitute a PNT domain. Residues 200 to 240 (ASPYYGSSYGPGAPSPGSSDFSTSGTDTPQSSHSSDSGGSD) are compositionally biased toward low complexity. The disordered stretch occupies residues 200–275 (ASPYYGSSYG…HGKRKRGRPR (76 aa)). Positions 246–265 (TDSKVFPRDGFPDYKKGEPK) are enriched in basic and acidic residues. The segment covering 266-275 (HGKRKRGRPR) has biased composition (basic residues). Residues 297 to 379 (THLWEFIRDI…DGRRLVYKFG (83 aa)) constitute a DNA-binding region (ETS).

Belongs to the ETS family. Interacts with TBP. Interacts with CREBBP and EP300; these act as transcriptional coactivators of ELF3 and positively modulate its function. Interacts with XRCC5/KU86 and XRCC6/KU70; these inhibit the ability of ELF3 to bind DNA and negatively modulate its transcriptional activity. Associated with CLND7 and POU2F3. Interacts with ZNF768.

The protein localises to the cytoplasm. Its subcellular location is the nucleus. Functionally, transcriptional activator that binds and transactivates ETS sequences containing the consensus nucleotide core sequence GGA[AT]. Acts synergistically with POU2F3 to transactivate the SPRR2A promoter and with RUNX1 to transactivate the ANGPT1 promoter. Also transactivates collagenase, CCL20, CLND7, FLG, KRT8, NOS2, PTGS2, SPRR2B, TGFBR2 and TGM3 promoters. Represses KRT4 promoter activity. Involved in mediating vascular inflammation. May play an important role in epithelial cell differentiation and tumorigenesis. May be a critical downstream effector of the ERBB2 signaling pathway. May be associated with mammary gland development and involution. Plays an important role in the regulation of transcription with TATA-less promoters in preimplantation embryos, which is essential in preimplantation development. The chain is ETS-related transcription factor Elf-3 from Rattus norvegicus (Rat).